The following is a 163-amino-acid chain: Ribosome maturation factor RimP (163 aa).

Belongs to the RimP family.

The protein resides in the cytoplasm. In terms of biological role, required for maturation of 30S ribosomal subunits. In Polynucleobacter asymbioticus (strain DSM 18221 / CIP 109841 / QLW-P1DMWA-1) (Polynucleobacter necessarius subsp. asymbioticus), this protein is Ribosome maturation factor RimP.